Reading from the N-terminus, the 44-residue chain is Thymosin beta (44 aa).

Residues 1–17 are compositionally biased toward basic and acidic residues; that stretch reads MSDKPDVKEVESFDKTT. The segment at 1–44 is disordered; the sequence is MSDKPDVKEVESFDKTTLKKTTTNEKNTLPTKEVIEQEKSGGSD. Low complexity predominate over residues 19–32; the sequence is KKTTTNEKNTLPTK. Residues 33-44 are compositionally biased toward basic and acidic residues; the sequence is EVIEQEKSGGSD.

The protein belongs to the thymosin beta family.

It localises to the cytoplasm. Its subcellular location is the cytoskeleton. Its function is as follows. Plays an important role in the organization of the cytoskeleton. Binds to and sequesters actin monomers (G actin) and therefore inhibits actin polymerization. In Gillichthys mirabilis (Long-jawed mudsucker), this protein is Thymosin beta.